Reading from the N-terminus, the 360-residue chain is Phospho-N-acetylmuramoyl-pentapeptide-transferase (360 aa).

10 helical membrane passes run 16–36 (FAVF…ALVL), 73–93 (TMGG…WADL), 97–117 (YVWV…VDDY), 134–154 (YFWQ…TAST), 168–188 (YSIP…VGSS), 199–219 (GLAI…CYLS), 236–256 (AGEL…FLWF), 263–283 (VFMG…IAVI), 288–308 (IVLF…VIQV), and 338–358 (VIVR…ATLK).

The protein belongs to the glycosyltransferase 4 family. MraY subfamily. Mg(2+) is required as a cofactor.

It is found in the cell inner membrane. It carries out the reaction UDP-N-acetyl-alpha-D-muramoyl-L-alanyl-gamma-D-glutamyl-meso-2,6-diaminopimeloyl-D-alanyl-D-alanine + di-trans,octa-cis-undecaprenyl phosphate = di-trans,octa-cis-undecaprenyl diphospho-N-acetyl-alpha-D-muramoyl-L-alanyl-D-glutamyl-meso-2,6-diaminopimeloyl-D-alanyl-D-alanine + UMP. Its pathway is cell wall biogenesis; peptidoglycan biosynthesis. Functionally, catalyzes the initial step of the lipid cycle reactions in the biosynthesis of the cell wall peptidoglycan: transfers peptidoglycan precursor phospho-MurNAc-pentapeptide from UDP-MurNAc-pentapeptide onto the lipid carrier undecaprenyl phosphate, yielding undecaprenyl-pyrophosphoryl-MurNAc-pentapeptide, known as lipid I. This is Phospho-N-acetylmuramoyl-pentapeptide-transferase from Pseudomonas fluorescens (strain Pf0-1).